We begin with the raw amino-acid sequence, 153 residues long: Large ribosomal subunit protein eL15 (153 aa).

Lysine 32 is covalently cross-linked (Glycyl lysine isopeptide (Lys-Gly) (interchain with G-Cter in SUMO2)). Phosphoserine occurs at positions 46 and 49. The tract at residues 114 to 135 (TSAGRKSRGLGKGHKFHHTIGG) is disordered. Residues 118–131 (RKSRGLGKGHKFHH) show a composition bias toward basic residues.

Belongs to the eukaryotic ribosomal protein eL15 family. Component of the large ribosomal subunit. Interacts with IFIT1 (via TPR repeats 1-4).

Its subcellular location is the cytoplasm. Functionally, component of the large ribosomal subunit. The ribosome is a large ribonucleoprotein complex responsible for the synthesis of proteins in the cell. This Sus scrofa (Pig) protein is Large ribosomal subunit protein eL15 (RPL15).